Reading from the N-terminus, the 423-residue chain is Putative competence-damage inducible protein (423 aa).

This sequence belongs to the CinA family.

The protein is Putative competence-damage inducible protein of Streptococcus pyogenes serotype M2 (strain MGAS10270).